Here is a 529-residue protein sequence, read N- to C-terminus: Beta-hexosaminidase subunit alpha (529 aa).

Positions 1–22 are cleaved as a signal peptide; it reads MASSRLWFSLLLAAALAGRATA. Positions 23-88 are excised as a propeptide; the sequence is LWPWPQNIQT…PRPYLTGKRH (66 aa). An intrachain disulfide couples Cys-58 to Cys-104. N-linked (GlcNAc...) asparagine glycans are attached at residues Asn-115, Asn-157, and Asn-295. The cysteines at positions 277 and 328 are disulfide-linked. The Proton donor role is filled by Glu-323. The interval 423–424 is critical for hydrolysis GM2 gangliosides; the sequence is NR. A disulfide bridge links Cys-505 with Cys-522.

This sequence belongs to the glycosyl hydrolase 20 family. In terms of assembly, there are 3 beta-hexosaminidase isozymes: isozyme A (hexosaminidase A) is a heterodimer composed of one subunit alpha and one subunit beta (chain A and B); isozyme B (hexosaminidase B) is a homodimer of two beta subunits (two chains A and B); isozyme S (hexosaminidase S) is a homodimer of two alpha subunits. The composition of the dimer (isozyme A versus isozyme S) has a significant effect on the substrate specificity of the alpha subunit active site.

It is found in the lysosome. The enzyme catalyses Hydrolysis of terminal non-reducing N-acetyl-D-hexosamine residues in N-acetyl-beta-D-hexosaminides.. It catalyses the reaction N-acetyl-beta-D-galactosaminyl-(1-&gt;4)-beta-D-3-sulfogalactosyl-(1-&gt;4)-beta-D-glucosyl-(1&lt;-&gt;1')-ceramide + H2O = a beta-D-3-sulfogalactosyl-(1-&gt;4)-beta-D-glucosyl-(1&lt;-&gt;1')-ceramide + N-acetyl-beta-D-galactosamine. It carries out the reaction a ganglioside GM2 (d18:1(4E)) + H2O = a ganglioside GM3 (d18:1(4E)) + N-acetyl-beta-D-galactosamine. The catalysed reaction is a ganglioside GM2 + H2O = a ganglioside GM3 + N-acetyl-beta-D-galactosamine. The enzyme catalyses beta-D-GalNAc-(1-&gt;4)-alpha-L-IdoA-(1-&gt;3)-beta-D-GalNAc-4-sulfate-(1-&gt;4)-alpha-L-IdoA-(1-&gt;3)-D-GalNAc-4-sulfate + H2O = alpha-L-IdoA-(1-&gt;3)-beta-D-GalNAc-4-sulfate-(1-&gt;4)-alpha-L-IdoA-(1-&gt;3)-D-GalNAc-4-sulfate + N-acetyl-D-galactosamine. It catalyses the reaction N-acetyl-beta-D-6-sulfogalactosaminyl-(1-&gt;4)-alpha-L-iduronyl-(1-&gt;3)-N-acetyl-D-6-sulfogalactosamine + H2O = alpha-L-iduronyl-(1-&gt;3)-N-acetyl-D-6-sulfogalactosamine + N-acetyl-D-6-sulfogalactosamine. With respect to regulation, addition of GM2A stimulates the hydrolysis of sulfated glycosphingolipid SM2 and the ganglioside GM2. Its function is as follows. Hydrolyzes the non-reducing end N-acetyl-D-hexosamine and/or sulfated N-acetyl-D-hexosamine of glycoconjugates, such as the oligosaccharide moieties from proteins and neutral glycolipids, or from certain mucopolysaccharides. The isozyme S is as active as the isozyme A on the anionic bis-sulfated glycans, the chondroitin-6-sulfate trisaccharide (C6S-3), and the dermatan sulfate pentasaccharide, and the sulfated glycosphingolipid SM2. The isozyme B does not hydrolyze each of these substrates, however hydrolyzes efficiently neutral oligosaccharide. Only the isozyme A is responsible for the degradation of GM2 gangliosides in the presence of GM2A. The protein is Beta-hexosaminidase subunit alpha of Pongo abelii (Sumatran orangutan).